A 917-amino-acid polypeptide reads, in one-letter code: Protein translocase subunit SecA (917 aa).

Residues Q87, 105 to 109, and D513 contribute to the ATP site; that span reads GEGKT. Positions 834–917 are disordered; that stretch reads EEQMNEMEKR…YKSCHGKLTG (84 aa). Residues 839–852 show a composition bias toward basic and acidic residues; the sequence is EMEKRRQEEAERQR. Over residues 862–876 the composition is skewed to low complexity; the sequence is APSQLAAPATPATPE. Positions 900, 902, 911, and 912 each coordinate Zn(2+).

It belongs to the SecA family. As to quaternary structure, monomer and homodimer. Part of the essential Sec protein translocation apparatus which comprises SecA, SecYEG and auxiliary proteins SecDF-YajC and YidC. Zn(2+) is required as a cofactor.

It is found in the cell inner membrane. The protein resides in the cytoplasm. It carries out the reaction ATP + H2O + cellular proteinSide 1 = ADP + phosphate + cellular proteinSide 2.. Functionally, part of the Sec protein translocase complex. Interacts with the SecYEG preprotein conducting channel. Has a central role in coupling the hydrolysis of ATP to the transfer of proteins into and across the cell membrane, serving both as a receptor for the preprotein-SecB complex and as an ATP-driven molecular motor driving the stepwise translocation of polypeptide chains across the membrane. The protein is Protein translocase subunit SecA of Saccharophagus degradans (strain 2-40 / ATCC 43961 / DSM 17024).